We begin with the raw amino-acid sequence, 487 residues long: Siroheme synthase (487 aa).

The precorrin-2 dehydrogenase /sirohydrochlorin ferrochelatase stretch occupies residues 1–203 (MNTFPLFFKL…GRSVEAEQAL (203 aa)). NAD(+) is bound by residues 22–23 (EV) and 43–44 (PQ). Residue Ser128 is modified to Phosphoserine. Residues 229–487 (GEVYIVGAGP…DQQAHALNML (259 aa)) are uroporphyrinogen-III C-methyltransferase. Residue Pro238 coordinates S-adenosyl-L-methionine. Residue Asp261 is the Proton acceptor of the active site. Lys283 (proton donor) is an active-site residue. S-adenosyl-L-methionine-binding positions include 314–316 (GGD), Val319, 344–345 (TA), Met396, and Ala425.

In the N-terminal section; belongs to the precorrin-2 dehydrogenase / sirohydrochlorin ferrochelatase family. This sequence in the C-terminal section; belongs to the precorrin methyltransferase family.

It catalyses the reaction uroporphyrinogen III + 2 S-adenosyl-L-methionine = precorrin-2 + 2 S-adenosyl-L-homocysteine + H(+). The catalysed reaction is precorrin-2 + NAD(+) = sirohydrochlorin + NADH + 2 H(+). It carries out the reaction siroheme + 2 H(+) = sirohydrochlorin + Fe(2+). The protein operates within cofactor biosynthesis; adenosylcobalamin biosynthesis; precorrin-2 from uroporphyrinogen III: step 1/1. Its pathway is cofactor biosynthesis; adenosylcobalamin biosynthesis; sirohydrochlorin from precorrin-2: step 1/1. It functions in the pathway porphyrin-containing compound metabolism; siroheme biosynthesis; precorrin-2 from uroporphyrinogen III: step 1/1. It participates in porphyrin-containing compound metabolism; siroheme biosynthesis; siroheme from sirohydrochlorin: step 1/1. The protein operates within porphyrin-containing compound metabolism; siroheme biosynthesis; sirohydrochlorin from precorrin-2: step 1/1. Multifunctional enzyme that catalyzes the SAM-dependent methylations of uroporphyrinogen III at position C-2 and C-7 to form precorrin-2 via precorrin-1. Then it catalyzes the NAD-dependent ring dehydrogenation of precorrin-2 to yield sirohydrochlorin. Finally, it catalyzes the ferrochelation of sirohydrochlorin to yield siroheme. This is Siroheme synthase from Psychrobacter sp. (strain PRwf-1).